Here is a 305-residue protein sequence, read N- to C-terminus: Fatty acid elongase 1 (305 aa).

Transmembrane regions (helical) follow at residues 24 to 44 (MIAN…FVFI), 80 to 100 (VVWN…VTPV), 129 to 149 (FWMG…IFLV), 158 to 178 (FLHW…YCVG), 183 to 203 (IWVA…FALA), 217 to 237 (YITI…IFAL), and 257 to 277 (IQLV…VASY). The HxxHH motif motif lies at 160 to 164 (HWYHH). The active-site Nucleophile is H163. The segment at 284 to 305 (PTVGGPSSTAGVSNGSVEKKVK) is disordered. Positions 288-299 (GPSSTAGVSNGS) are enriched in polar residues. The N-linked (GlcNAc...) asparagine glycan is linked to N297.

Belongs to the ELO family.

It localises to the endoplasmic reticulum membrane. It catalyses the reaction an acyl-CoA + malonyl-CoA + H(+) = a 3-oxoacyl-CoA + CO2 + CoA. It functions in the pathway lipid metabolism; fatty acid biosynthesis. Involved in the synthesis of fatty acids. Elongates C4 fatty acids to C10. This is Fatty acid elongase 1 from Trypanosoma brucei brucei (strain 927/4 GUTat10.1).